A 213-amino-acid polypeptide reads, in one-letter code: Orotate phosphoribosyltransferase (213 aa).

Lys-26 is a 5-phospho-alpha-D-ribose 1-diphosphate binding site. Orotate is bound at residue 34–35; the sequence is FF. Residues 72–73, Arg-99, Lys-100, Lys-103, His-105, and 124–132 contribute to the 5-phospho-alpha-D-ribose 1-diphosphate site; these read YK and DDVITAGTA. The orotate site is built by Thr-128 and Arg-156.

Belongs to the purine/pyrimidine phosphoribosyltransferase family. PyrE subfamily. As to quaternary structure, homodimer. Mg(2+) is required as a cofactor.

It catalyses the reaction orotidine 5'-phosphate + diphosphate = orotate + 5-phospho-alpha-D-ribose 1-diphosphate. Its pathway is pyrimidine metabolism; UMP biosynthesis via de novo pathway; UMP from orotate: step 1/2. Catalyzes the transfer of a ribosyl phosphate group from 5-phosphoribose 1-diphosphate to orotate, leading to the formation of orotidine monophosphate (OMP). The chain is Orotate phosphoribosyltransferase from Pectobacterium carotovorum subsp. carotovorum (strain PC1).